The primary structure comprises 510 residues: MTNDPGSGFAAVWNAVVAELNGEPNTDGDAGTGTTLTSPLTPQQRAWLNLVQPLTIVEGFALLSVPSSFVQNEIERHLRTPITAALSRRLGQQIQLGVRIAPPPADDDDDSVAAAVEDPGLEASPETSQEVSDEIDDFGENAPKSRQSWPTHFKKRSTDADTSASADGTSLNRRYTFDTFVIGASNRFAHAATLAIAEAPARAYNPLFIWGESGLGKTHLLHAAGNYAQRLFPGMRVKYVSTEEFTNDFINSLRDDRKVAFKRSYRDVDVLLVDDIQFIEGKEGIQEEFFHTFNTLHNANKQIVISSDRPPKQLATLEDRLRTRFEWGLITDVQPPELETRIAILRKKAQMERLAVPDDVLELIASSIERNIRELEGALIRVTAFASLNKTPIDKALAEIVLRDLIADADTMQISAATIMAATVEYFDTTVEELRGPGKTRALAQSRQIAMYLCRELTDLSLPKIGQAFGRDHTTVMYAQRKILSEMAERREVFDHVKELTTRIRQRSKR.

The segment at 1–107 (MTNDPGSGFA…VRIAPPPADD (107 aa)) is domain I, interacts with DnaA modulators. The interval 107-169 (DDDDSVAAAV…ADTSASADGT (63 aa)) is domain II. The interval 119 to 168 (PGLEASPETSQEVSDEIDDFGENAPKSRQSWPTHFKKRSTDADTSASADG) is disordered. Residues 170 to 386 (SLNRRYTFDT…GALIRVTAFA (217 aa)) are domain III, AAA+ region. Residues G214, G216, K217, and T218 each contribute to the ATP site. A domain IV, binds dsDNA region spans residues 387–510 (SLNKTPIDKA…TTRIRQRSKR (124 aa)).

This sequence belongs to the DnaA family. In terms of assembly, oligomerizes as a right-handed, spiral filament on DNA at oriC.

It localises to the cytoplasm. Functionally, plays an essential role in the initiation and regulation of chromosomal replication. ATP-DnaA binds to the origin of replication (oriC) to initiate formation of the DNA replication initiation complex once per cell cycle. Binds the DnaA box (a 9 base pair repeat at the origin) and separates the double-stranded (ds)DNA. Forms a right-handed helical filament on oriC DNA; dsDNA binds to the exterior of the filament while single-stranded (ss)DNA is stabiized in the filament's interior. The ATP-DnaA-oriC complex binds and stabilizes one strand of the AT-rich DNA unwinding element (DUE), permitting loading of DNA polymerase. After initiation quickly degrades to an ADP-DnaA complex that is not apt for DNA replication. Binds acidic phospholipids. In Mycobacterium ulcerans (strain Agy99), this protein is Chromosomal replication initiator protein DnaA.